A 1103-amino-acid polypeptide reads, in one-letter code: MSNKKRSKNENDESTSLPLENSELLIEYIHNLKSCLNVYRREIQEKNKYISIIKNDLSFHECILTNVNVVWSVFNNDLLNLLCNNEQKEEGEEIIKQRNIGDEINEYNNLTKLQNDENIKNNNMIKEDLEDDANQNILMKSPYYNIENFLQVFLKYINKKKKKVKVKVKDEGKKEKIEDKKYEQDDEEENEEEEEEEEEEEGEEENKEDEEFFKTFVSFNLYHNNNEKNISYDKNLVKQENDNKDEARGNDNMCGNYDIHNERGEMLDKGKSYSGDEKINTSDNAKSCSGDEKVITSDNGKSYDYVKNESEEQEEKENMLNNKKRSLECNPNEAKKICFSLEEKIGTVQSVKLKEYNELSKENIEKNKHDDNNICNYLSHNEGENVIEREDKLFNKLNNKNYRNEEEKKKNQINFDYLKKKIKNNQDVFEETIQKCFLINLKKTLNLINKIMYLKNVEFRKYNLDYIRKINYEKCFYYKNYIDIKKKISELQKDNESLKIQVDRLEKKKATLIYKLNNDNIRKHILDNNIKDYQNGIDNSKVSYFDEGENPYNRNNKNYRTDNKNSDDNNNNNNYYYNNYNSDDNYNSEDNEYNNGNYRFRNNYKKDSLNEDDVKKNPLKVCHKINSDSNIFVNFENIITKQNIIHSEPFRNLLKESNELYITLKEKEKENIILKNEILKMENKKDEEYEHLLNNTIEDKKELTRSIKELEINMMTCNMEKDKISNKVNTLEYEINVLKNIDKNQTMQLQQKENDILKMKLYIEKLKLSEKNLKDKIILLENEKDKMLSGIHIKDNSFNEESKSEEGKIQLRDIQNDNDEKYDDEKKRFKELFIENQKLKEELNKKRNVEEELHSLRKNYNIINEEIEEITKEFEKKQEQVDEMILQIKNKELELLDKFNNKMNKAYVEEKLKELKNTYEEKMKHINNIYKKHDDFVNIYLNLFFQARKNAILSDSQREEQMNLFIKLKDKYDIIFQKKIELTDILKNVYDCNKKLIGHCQDLEKENSTLQNKLSNEIKNSKMLSKNLSKNSDDHLLIEENNELRRRLICSVCMENFRNYIIIKCGHIYCNNCIFNNLKTRNRKCPQCKVPFDKKDLQKIFLD.

Positions lysine 173–phenylalanine 212 form a coiled coil. 2 disordered regions span residues glutamate 178–glutamate 210 and lysine 271–lysine 301. Residues glutamine 184 to glutamate 210 show a composition bias toward acidic residues. Basic and acidic residues predominate over residues lysine 271–asparagine 280. 2 coiled-coil regions span residues aspartate 304–asparagine 330 and tyrosine 478–asparagine 518. The segment at tyrosine 544–arginine 601 is disordered. A compositionally biased stretch (low complexity) spans aspartate 568 to asparagine 585. Coiled coils occupy residues phenylalanine 650–isoleucine 791, aspartate 819–lysine 932, and asparagine 993–lysine 1030. An RING-type zinc finger spans residues cysteine 1050–lysine 1089.

It localises to the host cell membrane. In Plasmodium falciparum (isolate 3D7), this protein is Trophozoite exported protein 1.